The sequence spans 328 residues: Cytochrome f (328 aa).

Positions 1-44 (MRTFNFLSFPQVHRQALVKAVLVAIATVSLLLTSDVINPQSAQA) are cleaved as a signal peptide. Residues Tyr45, Cys66, Cys69, and His70 each contribute to the heme site. Residues 294-314 (IKGLVLFLGGIMLCQILLVIK) traverse the membrane as a helical segment.

This sequence belongs to the cytochrome f family. In terms of assembly, the 4 large subunits of the cytochrome b6-f complex are cytochrome b6, subunit IV (17 kDa polypeptide, PetD), cytochrome f and the Rieske protein, while the 4 small subunits are PetG, PetL, PetM and PetN. The complex functions as a dimer. The cofactor is heme.

The protein localises to the cellular thylakoid membrane. Its function is as follows. Component of the cytochrome b6-f complex, which mediates electron transfer between photosystem II (PSII) and photosystem I (PSI), cyclic electron flow around PSI, and state transitions. The polypeptide is Cytochrome f (Microcystis aeruginosa (strain NIES-843 / IAM M-2473)).